The chain runs to 360 residues: Phospho-N-acetylmuramoyl-pentapeptide-transferase (360 aa).

10 helical membrane-spanning segments follow: residues 27–47 (GAFMTALIFGFLFGRPLINVL), 71–91 (TPTMGGLLIVGALLTSTLLWA), 93–113 (WDNPFVWMVLFVTLAYALIGF), 134–154 (LALGVIIAVIAALWASYNHPA), 168–188 (TLINLGLLYVPFAICVIVGSA), 199–219 (GLAIMPAMIAASTLGVIAYAV), 239–259 (ILIFTAALFGAGLGFLWYNAP), 262–282 (AVFMGDTGSLALGGALGAIAV), 288–308 (LVLAIVGGLFVVEALSVIIQV), and 337–357 (TIVIRFWIISLILAMIGLATL).

This sequence belongs to the glycosyltransferase 4 family. MraY subfamily. It depends on Mg(2+) as a cofactor.

It is found in the cell inner membrane. The enzyme catalyses UDP-N-acetyl-alpha-D-muramoyl-L-alanyl-gamma-D-glutamyl-meso-2,6-diaminopimeloyl-D-alanyl-D-alanine + di-trans,octa-cis-undecaprenyl phosphate = di-trans,octa-cis-undecaprenyl diphospho-N-acetyl-alpha-D-muramoyl-L-alanyl-D-glutamyl-meso-2,6-diaminopimeloyl-D-alanyl-D-alanine + UMP. Its pathway is cell wall biogenesis; peptidoglycan biosynthesis. Catalyzes the initial step of the lipid cycle reactions in the biosynthesis of the cell wall peptidoglycan: transfers peptidoglycan precursor phospho-MurNAc-pentapeptide from UDP-MurNAc-pentapeptide onto the lipid carrier undecaprenyl phosphate, yielding undecaprenyl-pyrophosphoryl-MurNAc-pentapeptide, known as lipid I. In Ruegeria pomeroyi (strain ATCC 700808 / DSM 15171 / DSS-3) (Silicibacter pomeroyi), this protein is Phospho-N-acetylmuramoyl-pentapeptide-transferase.